The primary structure comprises 356 residues: Dual-specificity RNA methyltransferase RlmN (356 aa).

Glu-92 functions as the Proton acceptor in the catalytic mechanism. Residues 98–327 (EKNRGTLCIS…HQGIRTMTRR (230 aa)) enclose the Radical SAM core domain. A disulfide bridge connects residues Cys-105 and Cys-337. 3 residues coordinate [4Fe-4S] cluster: Cys-112, Cys-116, and Cys-119. S-adenosyl-L-methionine-binding positions include 162 to 163 (GE), Ser-194, 216 to 218 (SLH), and Asn-294. Cys-337 serves as the catalytic S-methylcysteine intermediate.

The protein belongs to the radical SAM superfamily. RlmN family. [4Fe-4S] cluster serves as cofactor.

Its subcellular location is the cytoplasm. The enzyme catalyses adenosine(2503) in 23S rRNA + 2 reduced [2Fe-2S]-[ferredoxin] + 2 S-adenosyl-L-methionine = 2-methyladenosine(2503) in 23S rRNA + 5'-deoxyadenosine + L-methionine + 2 oxidized [2Fe-2S]-[ferredoxin] + S-adenosyl-L-homocysteine. It carries out the reaction adenosine(37) in tRNA + 2 reduced [2Fe-2S]-[ferredoxin] + 2 S-adenosyl-L-methionine = 2-methyladenosine(37) in tRNA + 5'-deoxyadenosine + L-methionine + 2 oxidized [2Fe-2S]-[ferredoxin] + S-adenosyl-L-homocysteine. Specifically methylates position 2 of adenine 2503 in 23S rRNA and position 2 of adenine 37 in tRNAs. m2A2503 modification seems to play a crucial role in the proofreading step occurring at the peptidyl transferase center and thus would serve to optimize ribosomal fidelity. The sequence is that of Dual-specificity RNA methyltransferase RlmN from Ruthia magnifica subsp. Calyptogena magnifica.